Reading from the N-terminus, the 275-residue chain is 18S rRNA (guanine(1575)-N(7))-methyltransferase (275 aa).

The disordered stretch occupies residues arginine 256 to phenylalanine 275. The Nuclear localization signal signature appears at glycine 257–serine 264.

Belongs to the class I-like SAM-binding methyltransferase superfamily. BUD23/WBSCR22 family. In terms of assembly, interacts with TRM112. Interacts with ECM16.

The protein localises to the cytoplasm. Its subcellular location is the nucleus. The catalysed reaction is guanosine(1575) in yeast 18S rRNA + S-adenosyl-L-methionine = N(7)-methylguanosine(1575) in yeast 18S rRNA + S-adenosyl-L-homocysteine. S-adenosyl-L-methionine-dependent methyltransferase that specifically methylates the N(7) position of guanine 1575 (m7G1575) in 18S rRNA. Requires the methyltransferase adapter protein TRM112 for full rRNA methyltransferase activity. Important for biogenesis end export of the 40S ribosomal subunit independent on its methyltransferase activity. Required for efficient cleavage of the primary 35S precursor rRNA at site A2. Involved in positioning the proximal bud pole signal. The sequence is that of 18S rRNA (guanine(1575)-N(7))-methyltransferase (BUD23) from Saccharomyces cerevisiae (strain ATCC 204508 / S288c) (Baker's yeast).